Consider the following 370-residue polypeptide: Protein DUF642 L-GALACTONO-1,4-LACTONE-RESPONSIVE GENE 1 (370 aa).

The signal sequence occupies residues 1–22 (MMYQEAALLLALLFISSNVVLS). An N-linked (GlcNAc...) asparagine glycan is attached at Asn-124.

As to expression, expressed at low levels in roots, seedlings and leaves.

The protein resides in the secreted. The protein localises to the cell wall. In Arabidopsis thaliana (Mouse-ear cress), this protein is Protein DUF642 L-GALACTONO-1,4-LACTONE-RESPONSIVE GENE 1.